The sequence spans 189 residues: Glutathione-dependent formaldehyde-activating enzyme (189 aa).

The region spanning 20 to 167 is the CENP-V/GFA domain; sequence FAGGTLVCKC…LKELGLEPYD (148 aa). Positions 27, 29, 48, 50, 53, 95, and 98 each coordinate Zn(2+).

Belongs to the Gfa family. It depends on Zn(2+) as a cofactor.

The enzyme catalyses S-(hydroxymethyl)glutathione = glutathione + formaldehyde. It participates in one-carbon metabolism; formaldehyde degradation; formate from formaldehyde (glutathione route): step 1/3. Functionally, catalyzes the condensation of formaldehyde and glutathione to S-hydroxymethylglutathione. This is Glutathione-dependent formaldehyde-activating enzyme from Rhodopseudomonas palustris (strain BisB18).